A 461-amino-acid polypeptide reads, in one-letter code: Putative cytochrome P450 132 (461 aa).

Residue Cys409 participates in heme binding.

This sequence belongs to the cytochrome P450 family. Heme serves as cofactor.

In Mycobacterium bovis (strain ATCC BAA-935 / AF2122/97), this protein is Putative cytochrome P450 132 (cyp132).